We begin with the raw amino-acid sequence, 131 residues long: Profilin-9 (131 aa).

A disulfide bridge links cysteine 13 with cysteine 115. Positions 81-97 (AVTRGKKGAGGITIKKT) match the Involved in PIP2 interaction motif. Position 111 is a phosphothreonine (threonine 111).

Belongs to the profilin family. As to quaternary structure, occurs in many kinds of cells as a complex with monomeric actin in a 1:1 ratio. Phosphorylated by MAP kinases.

It localises to the cytoplasm. The protein resides in the cytoskeleton. Binds to actin and affects the structure of the cytoskeleton. At high concentrations, profilin prevents the polymerization of actin, whereas it enhances it at low concentrations. The protein is Profilin-9 of Phleum pratense (Common timothy).